We begin with the raw amino-acid sequence, 254 residues long: 5-oxoprolinase subunit A (254 aa).

The protein belongs to the LamB/PxpA family. In terms of assembly, forms a complex composed of PxpA, PxpB and PxpC.

It carries out the reaction 5-oxo-L-proline + ATP + 2 H2O = L-glutamate + ADP + phosphate + H(+). Catalyzes the cleavage of 5-oxoproline to form L-glutamate coupled to the hydrolysis of ATP to ADP and inorganic phosphate. In Burkholderia vietnamiensis (strain G4 / LMG 22486) (Burkholderia cepacia (strain R1808)), this protein is 5-oxoprolinase subunit A.